The primary structure comprises 249 residues: Ditrans,polycis-undecaprenyl-diphosphate synthase ((2E,6E)-farnesyl-diphosphate specific) (249 aa).

Asp29 is a catalytic residue. Asp29 lines the Mg(2+) pocket. Substrate is bound by residues Gly30–Arg33, Trp34, Arg42, His46, and Ser74–Glu76. Asn77 functions as the Proton acceptor in the catalytic mechanism. Substrate-binding positions include Trp78, Arg80, Arg197, and Arg203–Ser205. Residue Glu216 participates in Mg(2+) binding.

This sequence belongs to the UPP synthase family. In terms of assembly, homodimer. Mg(2+) serves as cofactor.

It carries out the reaction 8 isopentenyl diphosphate + (2E,6E)-farnesyl diphosphate = di-trans,octa-cis-undecaprenyl diphosphate + 8 diphosphate. Its function is as follows. Generates ditrans,octacis-undecaprenyl pyrophosphate (UPP) from isopentenyl pyrophosphate (IPP) and farnesyl diphosphate. UPP is the precursor of glycosyl carrier lipid in the biosynthesis of bacterial cell wall polysaccharide components such as peptidoglycan and lipopolysaccharide. The sequence is that of Ditrans,polycis-undecaprenyl-diphosphate synthase ((2E,6E)-farnesyl-diphosphate specific) (uppS) from Micrococcus luteus (Micrococcus lysodeikticus).